Reading from the N-terminus, the 256-residue chain is Geranylgeranylglyceryl phosphate synthase (256 aa).

Asp28 and Ser53 together coordinate Mg(2+). Sn-glycerol 1-phosphate contacts are provided by residues 172–178, 203–204, and 225–226; these read YLEAGSG, GG, and GT.

It belongs to the GGGP/HepGP synthase family. Group II subfamily. The cofactor is Mg(2+).

It is found in the cytoplasm. The enzyme catalyses sn-glycerol 1-phosphate + (2E,6E,10E)-geranylgeranyl diphosphate = sn-3-O-(geranylgeranyl)glycerol 1-phosphate + diphosphate. The protein operates within membrane lipid metabolism; glycerophospholipid metabolism. Prenyltransferase that catalyzes the transfer of the geranylgeranyl moiety of geranylgeranyl diphosphate (GGPP) to the C3 hydroxyl of sn-glycerol-1-phosphate (G1P). This reaction is the first ether-bond-formation step in the biosynthesis of archaeal membrane lipids. The protein is Geranylgeranylglyceryl phosphate synthase of Methanococcus maripaludis (strain DSM 14266 / JCM 13030 / NBRC 101832 / S2 / LL).